We begin with the raw amino-acid sequence, 76 residues long: Dolichyl-diphosphooligosaccharide--protein glycosyltransferase subunit OST5 (76 aa).

The next 2 membrane-spanning stretches (helical) occupy residues 14 to 34 and 54 to 74; these read FYPV…ATFI and ALIA…AGGI.

Belongs to the OST5 family. In terms of assembly, component of the oligosaccharyltransferase (OST) complex.

The protein resides in the membrane. Functionally, subunit of the oligosaccharyl transferase (OST) complex that catalyzes the initial transfer of a defined glycan (Glc(3)Man(9)GlcNAc(2) in eukaryotes) from the lipid carrier dolichol-pyrophosphate to an asparagine residue within an Asn-X-Ser/Thr consensus motif in nascent polypeptide chains, the first step in protein N-glycosylation. N-glycosylation occurs cotranslationally and the complex associates with the Sec61 complex at the channel-forming translocon complex that mediates protein translocation across the endoplasmic reticulum (ER). All subunits are required for a maximal enzyme activity. This Dictyostelium discoideum (Social amoeba) protein is Dolichyl-diphosphooligosaccharide--protein glycosyltransferase subunit OST5.